Here is a 55-residue protein sequence, read N- to C-terminus: Small ribosomal subunit protein eS31 (55 aa).

Residues C21, C24, C39, and C42 each coordinate Zn(2+). Residues 21–42 form a C4-type zinc finger; it reads CPRCGPGVFLAEHADRFTCGRC.

It belongs to the eukaryotic ribosomal protein eS31 family. As to quaternary structure, part of the 30S ribosomal subunit. The cofactor is Zn(2+).

This chain is Small ribosomal subunit protein eS31, found in Thermoplasma volcanium (strain ATCC 51530 / DSM 4299 / JCM 9571 / NBRC 15438 / GSS1).